Consider the following 852-residue polypeptide: Exported protein YdbA (852 aa).

Positions 1 to 21 are cleaved as a signal peptide; it reads MQRKTLLSACIALALSGQGWA. Disordered regions lie at residues 30–50, 91–145, 307–354, 407–449, and 506–531; these read TTGE…KLSP, DDDH…FNND, TITN…QDGD, TNGG…KVIQ, and NGGT…VDGK. The segment covering 307 to 319 has biased composition (low complexity); sequence TITNGGTGTQING. A compositionally biased stretch (polar residues) spans 339–348; sequence GTEINGNNGK. A compositionally biased stretch (low complexity) spans 506-516; sequence NGGTGTQINGN. The span at 517 to 526 shows a compositional bias: polar residues; that stretch reads DATANNSGKT.

It localises to the secreted. The full-length protein (which is about 2000 amino acids long) is part of the autotransporter family. This Escherichia coli (strain K12) protein is Exported protein YdbA (ydbA).